The primary structure comprises 197 residues: SERTA domain-containing protein 3 (197 aa).

Residues 1 to 23 (MGGLKRKHSDLEEEEEEEKWDWS) are disordered. Residues 27 to 74 (LRSYQQALLRISLDKVQRSLGPRAPSLRRHVLIHNTLQQLQAAIRLAP) form the SERTA domain.

Interacts with RPA2.

Its subcellular location is the nucleus. The protein localises to the nucleolus. Functionally, antiviral interferon-stimulated protein that plays a role in innate immunity and in the suppression of viruses through different mechanisms. Plays a role in the late phase response of TLR-induced immune effector expression. Strong transcriptional coactivator. This chain is SERTA domain-containing protein 3 (Sertad3), found in Mus musculus (Mouse).